A 157-amino-acid chain; its full sequence is MIILGIDPALGSLGWAVVAKETAQLKYLASGIIRTNSKDAIHHRLAFINSTLEKVILEYQPNMVAIEETFVNTNSVTSLKLGYARGAIMSLIGRYNLDMREFKPNTVKKTVTGYGHAEKDQMLHMIKLLLSGTALITNSDEADAVAIAYTCLVTKNY.

Active-site residues include Asp-7, Glu-67, and Asp-140. Mg(2+)-binding residues include Asp-7, Glu-67, and Asp-140.

It belongs to the RuvC family. As to quaternary structure, homodimer which binds Holliday junction (HJ) DNA. The HJ becomes 2-fold symmetrical on binding to RuvC with unstacked arms; it has a different conformation from HJ DNA in complex with RuvA. In the full resolvosome a probable DNA-RuvA(4)-RuvB(12)-RuvC(2) complex forms which resolves the HJ. Mg(2+) serves as cofactor.

The protein resides in the cytoplasm. The catalysed reaction is Endonucleolytic cleavage at a junction such as a reciprocal single-stranded crossover between two homologous DNA duplexes (Holliday junction).. Functionally, the RuvA-RuvB-RuvC complex processes Holliday junction (HJ) DNA during genetic recombination and DNA repair. Endonuclease that resolves HJ intermediates. Cleaves cruciform DNA by making single-stranded nicks across the HJ at symmetrical positions within the homologous arms, yielding a 5'-phosphate and a 3'-hydroxyl group; requires a central core of homology in the junction. The consensus cleavage sequence is 5'-(A/T)TT(C/G)-3'. Cleavage occurs on the 3'-side of the TT dinucleotide at the point of strand exchange. HJ branch migration catalyzed by RuvA-RuvB allows RuvC to scan DNA until it finds its consensus sequence, where it cleaves and resolves the cruciform DNA. This Rickettsia conorii (strain ATCC VR-613 / Malish 7) protein is Crossover junction endodeoxyribonuclease RuvC.